We begin with the raw amino-acid sequence, 815 residues long: Probable disease resistance protein At5g66910 (815 aa).

The region spanning 1–150 (MVVVDWLGLG…NINKKLDRLS (150 aa)) is the RPW8 domain. NB-ARC domains lie at 156 to 283 (PLVS…DVWQ) and 341 to 440 (SPDE…DIWM). 196-203 (GPPGCGKT) provides a ligand contact to ATP. LRR repeat units lie at residues 656–678 (NLQEIDIDYCYDLDELPYWIPEV), 680–702 (SLKTLSITNCNKLSQLPEAIGNL), 704–726 (RLEVLRMCSCMNLSELPEATERL), and 728–750 (NLRSLDISHCLGLRKLPQEIGKL).

The protein belongs to the disease resistance NB-LRR family.

Functionally, probable disease resistance protein. This chain is Probable disease resistance protein At5g66910, found in Arabidopsis thaliana (Mouse-ear cress).